The primary structure comprises 216 residues: Adenylate kinase (216 aa).

10 to 15 is a binding site for ATP; it reads GAGKGT. The interval 30–59 is NMP; the sequence is STGDMFRAAMKNETALGLEAKSYIDKGELV. Residues Thr31, Arg36, 57 to 59, 85 to 88, and Gln92 each bind AMP; these read ELV and GFPR. The segment at 126–164 is LID; sequence GRFICRTCGATYHKLFNPPKVEGTCDRCGGHEFYQREDD. Arg127 is a binding site for ATP. Residues Cys130 and Cys133 each contribute to the Zn(2+) site. 136-137 serves as a coordination point for ATP; it reads TY. Positions 150 and 153 each coordinate Zn(2+). 2 residues coordinate AMP: Arg161 and Arg172. ATP is bound at residue Arg200.

Belongs to the adenylate kinase family. As to quaternary structure, monomer.

It localises to the cytoplasm. The enzyme catalyses AMP + ATP = 2 ADP. Its pathway is purine metabolism; AMP biosynthesis via salvage pathway; AMP from ADP: step 1/1. In terms of biological role, catalyzes the reversible transfer of the terminal phosphate group between ATP and AMP. Plays an important role in cellular energy homeostasis and in adenine nucleotide metabolism. The polypeptide is Adenylate kinase (Enterococcus faecalis (strain ATCC 700802 / V583)).